The chain runs to 311 residues: MECKRARAYSSSANLGSGFDILSIAHTAFFDTVEICVENKNLNNIIVESNSKIPLEPNKNSATYPIVKIMEEIGIKASLKVRVIKGIPEGLGLGSSGASAAAAVMAFNNLFNLNLSKEDLVRYAMYGEIASSGSPHPDNVAASVFGGVVSVVSVSPVKVVEIPINYSFDILLFTPLNVHIEEKTKKAREMVPKTVTLSDYINNSRYISSLLLGFIKGERELIRLGLNDKIVEKARLPLFPYYPKIKEVAIKYDAIGACVSGAGPSILVLTDKMTDENKIVEEGTKTCNEFNVECKVIKAKIAGGVGIEGRD.

Residue 88 to 98 coordinates ATP; that stretch reads PEGLGLGSSGA.

The protein belongs to the GHMP kinase family. Homoserine kinase subfamily.

Its subcellular location is the cytoplasm. It carries out the reaction L-homoserine + ATP = O-phospho-L-homoserine + ADP + H(+). The protein operates within amino-acid biosynthesis; L-threonine biosynthesis; L-threonine from L-aspartate: step 4/5. Functionally, catalyzes the ATP-dependent phosphorylation of L-homoserine to L-homoserine phosphate. The chain is Homoserine kinase from Saccharolobus solfataricus (strain ATCC 35092 / DSM 1617 / JCM 11322 / P2) (Sulfolobus solfataricus).